Consider the following 187-residue polypeptide: Large ribosomal subunit protein uL24c (187 aa).

Residues 1–41 (MAALQSSFAGLSTSFFGQRFSPPLSLPPLVKSTEGPCLIQA) constitute a chloroplast transit peptide.

This sequence belongs to the universal ribosomal protein uL24 family. As to quaternary structure, part of the 50S ribosomal subunit.

The protein localises to the plastid. It is found in the chloroplast. Functionally, one of two assembly initiator proteins, it binds directly to the 5'-end of the 23S rRNA, where it nucleates assembly of the 50S subunit. The chain is Large ribosomal subunit protein uL24c (RPL24) from Nicotiana tabacum (Common tobacco).